The sequence spans 633 residues: DNA-directed RNA polymerase subunit beta' (633 aa).

Zn(2+) is bound by residues C72, C74, C87, and C90. D468, D470, and D472 together coordinate Mg(2+).

It belongs to the RNA polymerase beta' chain family. RpoC1 subfamily. In terms of assembly, in plastids the minimal PEP RNA polymerase catalytic core is composed of four subunits: alpha, beta, beta', and beta''. When a (nuclear-encoded) sigma factor is associated with the core the holoenzyme is formed, which can initiate transcription. It depends on Mg(2+) as a cofactor. The cofactor is Zn(2+).

The protein localises to the plastid. It localises to the chloroplast. It carries out the reaction RNA(n) + a ribonucleoside 5'-triphosphate = RNA(n+1) + diphosphate. Its function is as follows. DNA-dependent RNA polymerase catalyzes the transcription of DNA into RNA using the four ribonucleoside triphosphates as substrates. In Cyanidium caldarium (Red alga), this protein is DNA-directed RNA polymerase subunit beta'.